Consider the following 199-residue polypeptide: Chaperone protein TorD (199 aa).

The protein belongs to the TorD/DmsD family. TorD subfamily.

It is found in the cytoplasm. Its function is as follows. Involved in the biogenesis of TorA. Acts on TorA before the insertion of the molybdenum cofactor and, as a result, probably favors a conformation of the apoenzyme that is competent for acquiring the cofactor. The polypeptide is Chaperone protein TorD (Escherichia coli O127:H6 (strain E2348/69 / EPEC)).